Consider the following 1294-residue polypeptide: von Willebrand factor A domain-containing protein 3B (1294 aa).

A VWFA domain is found at 508-684 (CIYILIDTSH…EDLTLLVKEM (177 aa)). Disordered stretches follow at residues 732–754 (CAKP…KGPW), 778–803 (RSQM…SSRR), 1012–1036 (APGE…DPLK), and 1193–1247 (DTQD…PRTA). The segment covering 738–748 (DVDSTQTSSLN) has biased composition (polar residues). The span at 778 to 787 (RSQMSSLRSS) shows a compositional bias: low complexity. Positions 1193–1202 (DTQDSREPRR) are enriched in basic and acidic residues. Residues 1203-1212 (EKPRRKKRPA) are compositionally biased toward basic residues. Low complexity predominate over residues 1213 to 1236 (KQPLQQAAPSDSDGSSHGISSHGS).

The protein resides in the cytoplasm. This Homo sapiens (Human) protein is von Willebrand factor A domain-containing protein 3B (VWA3B).